The primary structure comprises 169 residues: Large ribosomal subunit protein uL23 (169 aa).

The tract at residues 1 to 20 is disordered; it reads MAGKKVKSNTPKQDLSVSKS. Residues 8 to 20 are compositionally biased toward polar residues; the sequence is SNTPKQDLSVSKS.

This sequence belongs to the universal ribosomal protein uL23 family.

Functionally, this protein binds to a specific region on the 26S rRNA. This Dictyostelium discoideum (Social amoeba) protein is Large ribosomal subunit protein uL23 (rpl23a).